The primary structure comprises 269 residues: NAD-capped RNA hydrolase NudC (269 aa).

Arginine 74 contributes to the substrate binding site. Residues cysteine 103, cysteine 106, cysteine 121, and cysteine 124 each coordinate Zn(2+). Tyrosine 129 is a substrate binding site. The region spanning 130 to 253 is the Nudix hydrolase domain; it reads PRIFPCIIVA…TIARQLIENT (124 aa). Positions 163, 179, and 183 each coordinate a divalent metal cation. A Nudix box motif is present at residues 164–185; sequence GFLEVGETLEQCVAREVKEETG. 197–204 is a binding site for substrate; the sequence is QPWAFPSS. Residue glutamate 224 coordinates a divalent metal cation. Residue alanine 246 participates in substrate binding.

Belongs to the Nudix hydrolase family. NudC subfamily. In terms of assembly, homodimer. Mg(2+) is required as a cofactor. Mn(2+) serves as cofactor. Requires Zn(2+) as cofactor.

The enzyme catalyses a 5'-end NAD(+)-phospho-ribonucleoside in mRNA + H2O = a 5'-end phospho-adenosine-phospho-ribonucleoside in mRNA + beta-nicotinamide D-ribonucleotide + 2 H(+). The catalysed reaction is NAD(+) + H2O = beta-nicotinamide D-ribonucleotide + AMP + 2 H(+). It catalyses the reaction NADH + H2O = reduced beta-nicotinamide D-ribonucleotide + AMP + 2 H(+). Its function is as follows. mRNA decapping enzyme that specifically removes the nicotinamide adenine dinucleotide (NAD) cap from a subset of mRNAs by hydrolyzing the diphosphate linkage to produce nicotinamide mononucleotide (NMN) and 5' monophosphate mRNA. The NAD-cap is present at the 5'-end of some mRNAs and stabilizes RNA against 5'-processing. Has preference for mRNAs with a 5'-end purine. Catalyzes the hydrolysis of a broad range of dinucleotide pyrophosphates. This is NAD-capped RNA hydrolase NudC from Vibrio atlanticus (strain LGP32) (Vibrio splendidus (strain Mel32)).